We begin with the raw amino-acid sequence, 108 residues long: Large ribosomal subunit protein eL33A (108 aa).

This sequence belongs to the eukaryotic ribosomal protein eL33 family. Component of the large ribosomal subunit (LSU). Mature yeast ribosomes consist of a small (40S) and a large (60S) subunit. The 40S small subunit contains 1 molecule of ribosomal RNA (18S rRNA) and at least 33 different proteins. The large 60S subunit contains 3 rRNA molecules (25S, 5.8S and 5S rRNA) and at least 46 different proteins.

It is found in the cytoplasm. The protein resides in the nucleus. The protein localises to the nucleolus. Component of the ribosome, a large ribonucleoprotein complex responsible for the synthesis of proteins in the cell. The small ribosomal subunit (SSU) binds messenger RNAs (mRNAs) and translates the encoded message by selecting cognate aminoacyl-transfer RNA (tRNA) molecules. The large subunit (LSU) contains the ribosomal catalytic site termed the peptidyl transferase center (PTC), which catalyzes the formation of peptide bonds, thereby polymerizing the amino acids delivered by tRNAs into a polypeptide chain. The nascent polypeptides leave the ribosome through a tunnel in the LSU and interact with protein factors that function in enzymatic processing, targeting, and the membrane insertion of nascent chains at the exit of the ribosomal tunnel. The chain is Large ribosomal subunit protein eL33A (rpl35b) from Schizosaccharomyces pombe (strain 972 / ATCC 24843) (Fission yeast).